The chain runs to 309 residues: Aspartate carbamoyltransferase catalytic subunit (309 aa).

Carbamoyl phosphate is bound by residues R55 and T56. K85 contributes to the L-aspartate binding site. Residues R106, H135, and Q138 each contribute to the carbamoyl phosphate site. L-aspartate is bound by residues R168 and R230. L268 and P269 together coordinate carbamoyl phosphate.

This sequence belongs to the aspartate/ornithine carbamoyltransferase superfamily. ATCase family. As to quaternary structure, heterododecamer (2C3:3R2) of six catalytic PyrB chains organized as two trimers (C3), and six regulatory PyrI chains organized as three dimers (R2).

It catalyses the reaction carbamoyl phosphate + L-aspartate = N-carbamoyl-L-aspartate + phosphate + H(+). It participates in pyrimidine metabolism; UMP biosynthesis via de novo pathway; (S)-dihydroorotate from bicarbonate: step 2/3. Its function is as follows. Catalyzes the condensation of carbamoyl phosphate and aspartate to form carbamoyl aspartate and inorganic phosphate, the committed step in the de novo pyrimidine nucleotide biosynthesis pathway. This Vibrio vulnificus (strain YJ016) protein is Aspartate carbamoyltransferase catalytic subunit.